A 310-amino-acid polypeptide reads, in one-letter code: Porphobilinogen deaminase (310 aa).

An S-(dipyrrolylmethanemethyl)cysteine modification is found at Cys-242.

The protein belongs to the HMBS family. Monomer. Dipyrromethane is required as a cofactor.

The enzyme catalyses 4 porphobilinogen + H2O = hydroxymethylbilane + 4 NH4(+). Its pathway is porphyrin-containing compound metabolism; protoporphyrin-IX biosynthesis; coproporphyrinogen-III from 5-aminolevulinate: step 2/4. Tetrapolymerization of the monopyrrole PBG into the hydroxymethylbilane pre-uroporphyrinogen in several discrete steps. The sequence is that of Porphobilinogen deaminase from Shewanella pealeana (strain ATCC 700345 / ANG-SQ1).